We begin with the raw amino-acid sequence, 582 residues long: Eukaryotic translation initiation factor 2A (582 aa).

WD repeat units follow at residues 21–63 (GPPK…NIVN), 73–124 (LDLP…NVKS), 273–314 (PKNG…IFDF), and 358–402 (TASD…LHKY). Residues 436-533 (DLPTQESKPA…NTGDPETDKK (98 aa)) form a disordered region. Positions 482–580 (SKTALKNQKK…LLKELEDLEI (99 aa)) form a coiled coil. Basic and acidic residues predominate over residues 495–506 (KKAAKQESKMDE). Over residues 510–522 (SDSTNVQNNTPVA) the composition is skewed to polar residues.

Belongs to the WD repeat EIF2A family.

In terms of biological role, functions in the early steps of protein synthesis of a small number of specific mRNAs. Acts by directing the binding of methionyl-tRNAi to 40S ribosomal subunits. In contrast to the eIF-2 complex, it binds methionyl-tRNAi to 40S subunits in a codon-dependent manner, whereas the eIF-2 complex binds methionyl-tRNAi to 40S subunits in a GTP-dependent manner. This is Eukaryotic translation initiation factor 2A (eif2a) from Xenopus laevis (African clawed frog).